The chain runs to 316 residues: Adenine deaminase (316 aa).

Positions 14, 16, and 194 each coordinate Zn(2+). Catalysis depends on Glu197, which acts as the Proton donor. Asp275 contacts Zn(2+). Residue Asp276 participates in substrate binding.

It belongs to the metallo-dependent hydrolases superfamily. Adenosine and AMP deaminases family. Adenine deaminase type 2 subfamily. Zn(2+) is required as a cofactor.

The enzyme catalyses adenine + H2O + H(+) = hypoxanthine + NH4(+). Its function is as follows. Catalyzes the hydrolytic deamination of adenine to hypoxanthine. Plays an important role in the purine salvage pathway and in nitrogen catabolism. This Pseudomonas aeruginosa (strain LESB58) protein is Adenine deaminase.